Here is a 357-residue protein sequence, read N- to C-terminus: MSKQILILPGDGIGPEIMAEAVKVLQRIDTQHGLGFELVYDELGGAAYDKYGSPLADETLERARAADAVLLGAVGGPQWDTIDPSLRPERGLLKIRSQLGLFANLRPALLYPQLADASTLKPEVVAGLDLLILRELTGGIYFGQPRGNRTLDNGERQAYDTLPYSESEICRIAKAGFEMARLRGKKLCSVDKANVLASSQLWRAVVEEVAKDYPDIALSHMYVDNAAMQLVRAPKQFDVIVTDNMFGDILSDQASMLTGSIGMLPSASLDANSKGMYEPCHGSAPDIAGKGIANPLATILSVAMMLRYTFAQADAADAIERAVGKVLDQGLRTADIWSEGTTKVGTVAMGDAVVAAL.

NAD(+) is bound at residue 76–89; sequence GPQWDTIDPSLRPE. Residues arginine 96, arginine 106, arginine 134, and aspartate 224 each contribute to the substrate site. Aspartate 224, aspartate 248, and aspartate 252 together coordinate Mg(2+). Residue 282-294 coordinates NAD(+); the sequence is GSAPDIAGKGIAN.

It belongs to the isocitrate and isopropylmalate dehydrogenases family. LeuB type 1 subfamily. Homodimer. Mg(2+) is required as a cofactor. Requires Mn(2+) as cofactor.

Its subcellular location is the cytoplasm. The enzyme catalyses (2R,3S)-3-isopropylmalate + NAD(+) = 4-methyl-2-oxopentanoate + CO2 + NADH. The protein operates within amino-acid biosynthesis; L-leucine biosynthesis; L-leucine from 3-methyl-2-oxobutanoate: step 3/4. In terms of biological role, catalyzes the oxidation of 3-carboxy-2-hydroxy-4-methylpentanoate (3-isopropylmalate) to 3-carboxy-4-methyl-2-oxopentanoate. The product decarboxylates to 4-methyl-2 oxopentanoate. In Xanthomonas oryzae pv. oryzae (strain MAFF 311018), this protein is 3-isopropylmalate dehydrogenase.